The following is a 256-amino-acid chain: 3-hydroxy-5-phosphonooxypentane-2,4-dione thiolase (256 aa).

The Schiff-base intermediate with substrate role is filled by lysine 168.

The protein belongs to the DeoC/FbaB aldolase family. In terms of assembly, homodecamer.

It is found in the cytoplasm. It catalyses the reaction dihydroxyacetone phosphate + acetyl-CoA = 3-hydroxy-2,4-dioxopentyl phosphate + CoA. In terms of biological role, involved in the degradation of phospho-AI-2, thereby terminating induction of the lsr operon and closing the AI-2 signaling cycle. Catalyzes the transfer of an acetyl moiety from 3-hydroxy-5-phosphonooxypentane-2,4-dione to CoA to form glycerone phosphate and acetyl-CoA. The chain is 3-hydroxy-5-phosphonooxypentane-2,4-dione thiolase (lsrF) from Shigella flexneri serotype 5b (strain 8401).